We begin with the raw amino-acid sequence, 904 residues long: DNA mismatch repair protein MutS (904 aa).

Residue 655–662 coordinates ATP; that stretch reads GPNMGGKS.

It belongs to the DNA mismatch repair MutS family.

Functionally, this protein is involved in the repair of mismatches in DNA. It is possible that it carries out the mismatch recognition step. This protein has a weak ATPase activity. The protein is DNA mismatch repair protein MutS of Agrobacterium fabrum (strain C58 / ATCC 33970) (Agrobacterium tumefaciens (strain C58)).